The chain runs to 116 residues: Thioredoxin H-type (116 aa).

One can recognise a Thioredoxin domain in the interval 2–115; sequence AEEAQVIACH…HKIAVHAPIT (114 aa). Catalysis depends on nucleophile residues Cys39 and Cys42. The cysteines at positions 39 and 42 are disulfide-linked.

This sequence belongs to the thioredoxin family. Plant H-type subfamily.

It is found in the cytoplasm. Functionally, participates in various redox reactions through the reversible oxidation of the active center dithiol to a disulfide. The H form is known to activate a number of cytosolic enzymes. This is Thioredoxin H-type from Fagopyrum esculentum (Common buckwheat).